The chain runs to 308 residues: Oxygen-dependent coproporphyrinogen-III oxidase (308 aa).

Ser100 is a substrate binding site. A divalent metal cation is bound by residues His104 and His114. His114 serves as the catalytic Proton donor. 116–118 is a substrate binding site; that stretch reads NFR. 2 residues coordinate a divalent metal cation: His153 and His183. The important for dimerization stretch occupies residues 248-283; the sequence is YVEFNLVFDRGTIFGLQSGGRTESILSSMPPMATWK. A substrate-binding site is contributed by 266–268; it reads GGR.

This sequence belongs to the aerobic coproporphyrinogen-III oxidase family. In terms of assembly, homodimer. A divalent metal cation is required as a cofactor.

The protein resides in the cytoplasm. It carries out the reaction coproporphyrinogen III + O2 + 2 H(+) = protoporphyrinogen IX + 2 CO2 + 2 H2O. The protein operates within porphyrin-containing compound metabolism; protoporphyrin-IX biosynthesis; protoporphyrinogen-IX from coproporphyrinogen-III (O2 route): step 1/1. In terms of biological role, involved in the heme biosynthesis. Catalyzes the aerobic oxidative decarboxylation of propionate groups of rings A and B of coproporphyrinogen-III to yield the vinyl groups in protoporphyrinogen-IX. The protein is Oxygen-dependent coproporphyrinogen-III oxidase of Francisella tularensis subsp. holarctica (strain LVS).